Reading from the N-terminus, the 764-residue chain is MRGNKNYYFLSLLYFLSLPILHFSSCTHKCGDIQIPFPFGIGEIGCYLDEWYQVECRPSATSGKVFPFLPKINMEVVNISLPGTNDDIFYTYPSFSSIRVKSPVASMGCSTDGNDSGLTLNFTETPFFFGDQNNLVAVGCNNKASLTNVEPTMVGCESTCTTSNNSRSIPFFNKVGCSGSVDSVTRDLLPKNYIPVCSTTKIQDDTLICNGEGCCQAKAPVGSQQLIGVTITNSTNGNLTKGGGCKVAFLTDEVYTLSNATDPEQFFSKGVTVSLGWFIQTKNHSFLQSLDCQNRGELDKGKKRTRQCTCDNHIASGMGYASCACASGYKGNPYVSDDCQDINECTEYKNPCGDTRILYRNTCINTSGGHRCIDYHIPEVMLGLGAGFFVLIVGGGIWWWRKLLRKRRMTNRKRKFFKRNGGLLLQQQLNTTQGRVEKTKLFSSRELEKATDNFNDNRVIGQGGQGTVYKGMLVDGRSVAVKKSNVVDEDKLQEFINEVIILSQINHRHVVKLLGCCLETEVPILVYEFIPNGNLFQHLHEEFDDYTALWGVRMRIAVDISGAFSYLHTAACSPIYHRDIKSTNILLDEKYRAKVSDFGTSRSVSIDHTHWTTVISGTVGYVDPEYYGSSHFTEKSDVYSFGVVLVELITGEKPVITLSETQEITGLADYFRLAMRENRLFEIIDARIRNDCKLEQVIAVANLALRCLKKTGKTRPDMREVSTALERICSAPEDFQVQIQIDEEDETTKLFRGYSGSTEIARSM.

A signal peptide spans 1-26 (MRGNKNYYFLSLLYFLSLPILHFSSC). Residues 27–379 (THKCGDIQIP…HRCIDYHIPE (353 aa)) are Extracellular-facing. 8 N-linked (GlcNAc...) asparagine glycosylation sites follow: Asn-78, Asn-114, Asn-121, Asn-164, Asn-233, Asn-238, Asn-259, and Asn-283. The tract at residues 308 to 372 (CTCDNHIASG…CINTSGGHRC (65 aa)) is atypical EGF-like. 3 cysteine pairs are disulfide-bonded: Cys-310–Cys-323, Cys-345–Cys-363, and Cys-352–Cys-372. N-linked (GlcNAc...) asparagine glycosylation occurs at Asn-365. Residues 380 to 400 (VMLGLGAGFFVLIVGGGIWWW) traverse the membrane as a helical segment. The Cytoplasmic segment spans residues 401 to 764 (RKLLRKRRMT…SGSTEIARSM (364 aa)). The 275-residue stretch at 454 to 728 (FNDNRVIGQG…REVSTALERI (275 aa)) folds into the Protein kinase domain. Residues 460–468 (IGQGGQGTV) and Lys-482 contribute to the ATP site. The residue at position 527 (Tyr-527) is a Phosphotyrosine. Asp-579 serves as the catalytic Proton acceptor. 2 positions are modified to phosphothreonine: Thr-613 and Thr-618. Position 626 is a phosphotyrosine (Tyr-626).

This sequence belongs to the protein kinase superfamily. Ser/Thr protein kinase family.

The protein localises to the membrane. The enzyme catalyses L-seryl-[protein] + ATP = O-phospho-L-seryl-[protein] + ADP + H(+). It catalyses the reaction L-threonyl-[protein] + ATP = O-phospho-L-threonyl-[protein] + ADP + H(+). In terms of biological role, putative serine/threonine-protein kinase that may function as a signaling receptor of extracellular matrix component. The sequence is that of Putative wall-associated receptor kinase-like 13 (WAKL13) from Arabidopsis thaliana (Mouse-ear cress).